The chain runs to 27 residues: thr operon leader peptide (27 aa).

It belongs to the thr operon leader peptide family.

This protein is involved in control of the biosynthesis of threonine. In Escherichia coli O157:H7, this protein is thr operon leader peptide.